The chain runs to 147 residues: Hemoglobin subunit beta (147 aa).

One can recognise a Globin domain in the interval 3-147 (HWTAEEKQII…VAHALARKYH (145 aa)). Heme b contacts are provided by histidine 64 and histidine 93.

Heterotetramer of two alpha (or alpha-D) and two beta chains. Red blood cells.

In terms of biological role, involved in oxygen transport from the lung to the various peripheral tissues. The beta chain is a component of adult hemoglobin A and D. The polypeptide is Hemoglobin subunit beta (Aythya fuligula (Tufted duck)).